A 318-amino-acid chain; its full sequence is Acetyl-coenzyme A carboxylase carboxyl transferase subunit alpha (318 aa).

A CoA carboxyltransferase C-terminal domain is found at aspartate 31–alanine 292.

Belongs to the AccA family. Acetyl-CoA carboxylase is a heterohexamer composed of biotin carboxyl carrier protein (AccB), biotin carboxylase (AccC) and two subunits each of ACCase subunit alpha (AccA) and ACCase subunit beta (AccD).

It localises to the cytoplasm. The enzyme catalyses N(6)-carboxybiotinyl-L-lysyl-[protein] + acetyl-CoA = N(6)-biotinyl-L-lysyl-[protein] + malonyl-CoA. The protein operates within lipid metabolism; malonyl-CoA biosynthesis; malonyl-CoA from acetyl-CoA: step 1/1. In terms of biological role, component of the acetyl coenzyme A carboxylase (ACC) complex. First, biotin carboxylase catalyzes the carboxylation of biotin on its carrier protein (BCCP) and then the CO(2) group is transferred by the carboxyltransferase to acetyl-CoA to form malonyl-CoA. In Listeria monocytogenes serotype 4a (strain HCC23), this protein is Acetyl-coenzyme A carboxylase carboxyl transferase subunit alpha.